Consider the following 1237-residue polypeptide: Rho guanine nucleotide exchange factor 10-like protein (1237 aa).

Disordered regions lie at residues 1–117 and 132–203; these read MASS…SSRR and YDDV…QPKM. A compositionally biased stretch (acidic residues) spans 25 to 45; the sequence is EAEDDPGEGFEFDDSDDDEDT. Ser39 is subject to Phosphoserine. Phosphotyrosine is present on residues Tyr132 and Tyr153. Basic and acidic residues-rich tracts occupy residues 146–163 and 184–194; these read EAER…RAPQ and EEAKPEAEPTK. A Phosphoserine modification is found at Ser241. The DH domain maps to 276–463; sequence VRRHILGSIV…ETLAEKLNEQ (188 aa). Disordered stretches follow at residues 1091–1118 and 1142–1164; these read QEEA…PASH and PGPL…HSEE.

Interacts with RHOA, RHOB and RHOC.

The protein localises to the cytoplasm. In terms of biological role, acts as a guanine nucleotide exchange factor (GEF) for RHOA, RHOB and RHOC. The sequence is that of Rho guanine nucleotide exchange factor 10-like protein (ARHGEF10L) from Bos taurus (Bovine).